The chain runs to 411 residues: Arginine deiminase (411 aa).

The active-site Amidino-cysteine intermediate is the C401.

It belongs to the arginine deiminase family. Glycosylated.

Its subcellular location is the cytoplasm. The catalysed reaction is L-arginine + H2O = L-citrulline + NH4(+). Its pathway is amino-acid degradation; L-arginine degradation via ADI pathway; carbamoyl phosphate from L-arginine: step 1/2. This is Arginine deiminase (arcA) from Streptococcus pyogenes serotype M1.